The primary structure comprises 613 residues: MFDIQEELKKLPDKSGVYIMKDANGVVIYVGKAVVLKNRVRQYFQQSANHPPKVQAMVSKVSEFEYIVVDSEVEALMLECTLIKKYKPKYNILLKDDKHYPYIKVTLNEEYPRILKTRRVEKDGARYFGPYSSGFAVNDTIDTLKKLFSLKTCNKNLPRDIGKTRPCLNYHMKQCLAPCQGGVNRDEYREMMKKICRFLGGQYDEIINDLRIQMETAAEQLDFEKAAQLRNKITSIKQLSESQKVLFTDLEDRDIIGYSADSTDLCIQVFFVRNGRVIGREHFIFEGEANEDKGYSLSTFIKQFYTKVQYVPSEIVLQSEVDDSETIAKWLTEKRGFKVALRVPQRGDLVKLVHMVSENAEITLKLHRERQSREGTVHSEGMAQLVKLLGLEEAPARIESYDISNTGSSEIVASMVVFENGRPARQEYRKFKMKSIEQQNDYGSMQETLFRRLNRAKREKEEGTENAKFSKLPDLILVDGGSNHVNAARQVVEELGYNFKIAGMAKDDRHRTKSLVYMGNEYELATNMPLLRFITEIQDETHRVAVEYNRKLREKRYVRSELDEIEGIGQTRKKALIKHFKSVAAIRKADIAQLQEVNGISEKIAKNIYEYFN.

The GIY-YIG domain occupies 13–92 (DKSGVYIMKD…IKKYKPKYNI (80 aa)). Residues 204 to 239 (DEIINDLRIQMETAAEQLDFEKAAQLRNKITSIKQL) form the UVR domain.

It belongs to the UvrC family. Interacts with UvrB in an incision complex.

It localises to the cytoplasm. Its function is as follows. The UvrABC repair system catalyzes the recognition and processing of DNA lesions. UvrC both incises the 5' and 3' sides of the lesion. The N-terminal half is responsible for the 3' incision and the C-terminal half is responsible for the 5' incision. The protein is UvrABC system protein C of Ruminiclostridium cellulolyticum (strain ATCC 35319 / DSM 5812 / JCM 6584 / H10) (Clostridium cellulolyticum).